A 131-amino-acid polypeptide reads, in one-letter code: Small ribosomal subunit protein uS11 (131 aa).

Belongs to the universal ribosomal protein uS11 family. Part of the 30S ribosomal subunit. Interacts with proteins S7 and S18. Binds to IF-3.

In terms of biological role, located on the platform of the 30S subunit, it bridges several disparate RNA helices of the 16S rRNA. Forms part of the Shine-Dalgarno cleft in the 70S ribosome. The protein is Small ribosomal subunit protein uS11 of Geobacter metallireducens (strain ATCC 53774 / DSM 7210 / GS-15).